Consider the following 177-residue polypeptide: ATP synthase subunit delta (177 aa).

It belongs to the ATPase delta chain family. In terms of assembly, F-type ATPases have 2 components, F(1) - the catalytic core - and F(0) - the membrane proton channel. F(1) has five subunits: alpha(3), beta(3), gamma(1), delta(1), epsilon(1). F(0) has three main subunits: a(1), b(2) and c(10-14). The alpha and beta chains form an alternating ring which encloses part of the gamma chain. F(1) is attached to F(0) by a central stalk formed by the gamma and epsilon chains, while a peripheral stalk is formed by the delta and b chains.

Its subcellular location is the cell inner membrane. Functionally, f(1)F(0) ATP synthase produces ATP from ADP in the presence of a proton or sodium gradient. F-type ATPases consist of two structural domains, F(1) containing the extramembraneous catalytic core and F(0) containing the membrane proton channel, linked together by a central stalk and a peripheral stalk. During catalysis, ATP synthesis in the catalytic domain of F(1) is coupled via a rotary mechanism of the central stalk subunits to proton translocation. This protein is part of the stalk that links CF(0) to CF(1). It either transmits conformational changes from CF(0) to CF(1) or is implicated in proton conduction. This chain is ATP synthase subunit delta, found in Shewanella pealeana (strain ATCC 700345 / ANG-SQ1).